Reading from the N-terminus, the 109-residue chain is Small ribosomal subunit protein bS6 (109 aa).

It belongs to the bacterial ribosomal protein bS6 family.

In terms of biological role, binds together with bS18 to 16S ribosomal RNA. In Ehrlichia canis (strain Jake), this protein is Small ribosomal subunit protein bS6.